We begin with the raw amino-acid sequence, 492 residues long: MTKVCPKTEEKRVVSEAVVEPISADVSFASNHFPTYKLGPDDQIVDEPDEDDKVPSVKDVVGKETGDLSDQHKKLSVRDLACKFDKNLAAASKLVDEAKLNDVTSLEGHVMLKKLRDALETMRGRMDGRNREAVEKAISMVEALAVKLTQNEGELIHDKFEVKKLASFLKKASDDAKKLVNQEKSFACAEIESARALVMKLGGAFEEQELCSKASRDQGPNVEKLVEEVQEARRIRRLHKPTMVIGMQHELRDLKSQIQEKSAYSVKLQREIAIIKKAEGSKSCPYVLDGAQSLGSCLRIRASSDSGIDISKCSIHWYRAASESSRREAISGANRSVYAPEPFDVGRVIQADIVSNGQKFTVTTDGPINTAAGLQSRVESLLRKSNSEFTVVISQMNGQDHASRSHVFTVGKARIKLSRGWITKAREIYSTSMQLCGVRGNANVPAKALFWQLRKGLTFLLTFESEQERNAAIVLARTYAYDCNVTLVGPDD.

A coiled-coil region spans residues 112-132 (LKKLRDALETMRGRMDGRNRE).

The protein belongs to the SCAB family. As to expression, expressed in roots, stems, leaves, siliques and flowers.

It localises to the cytoplasm. The protein resides in the cytoskeleton. Functionally, probable plant-specific actin binding protein that bundles and stabilizes microfilaments (MFs). This chain is Stomatal closure-related actin-binding protein 2, found in Arabidopsis thaliana (Mouse-ear cress).